The sequence spans 626 residues: MSDTAAAPDKTAKSALAEKLATLPTSPGVYRFSNAAGTVIYVGKARNLRNRVRSYFNSQGRQPGKTAVMVSHIADLNVIITSSEVEALILENNLIKELKPRYNVNLKDDKSYPWLVITNERFPRIFLTRQVRRDGSLYFGPYTEASQLRLILDLIGSIFPVRSCKYKLTEEAVASGRYRVCLDYHIHKCKGPCEGLQSEEEYQAMIREIVTLLKGKTSALLRDLSAEMQKKAKELKFEEAAALKAQIEGLKRYAERQKIVSTEAIDRDVFAVAAGEDDACGVVFRIREGKLIGSRHTYLSNTGNTPLPNLLASFVEHYYLETPDLIPQELMLQAELPEEELEALRQLLSSRQTERRQVRFTVPRIGEKAHLIAMCLDNAKHHLHEFMVQKKLRGEIARKSPALESLKQVLHLGKLPERIECFDNSHFQGTDYVSSMVTFVSGKPKKSDYRKFRLKSFEGSDDYAAMREAVTRRYGGSLAGELPLPDLVLIDGGKGQVNVAWQVLQELGLDLPVAGLAKRLEEIYVPNEPDPYNLPKTSPALKLLQQLRDEAHRFAITYHRKLRSDRTIRTELTGIKGVGEKSAEKLLKHFGSVESVSKASIDELSAVAGRKTAESIYRYFNAGDAP.

Residues 25–104 (TSPGVYRFSN…IKELKPRYNV (80 aa)) enclose the GIY-YIG domain. Residues 218–253 (SALLRDLSAEMQKKAKELKFEEAAALKAQIEGLKRY) enclose the UVR domain.

The protein belongs to the UvrC family. In terms of assembly, interacts with UvrB in an incision complex.

The protein localises to the cytoplasm. Functionally, the UvrABC repair system catalyzes the recognition and processing of DNA lesions. UvrC both incises the 5' and 3' sides of the lesion. The N-terminal half is responsible for the 3' incision and the C-terminal half is responsible for the 5' incision. The sequence is that of UvrABC system protein C from Chlorobaculum tepidum (strain ATCC 49652 / DSM 12025 / NBRC 103806 / TLS) (Chlorobium tepidum).